Reading from the N-terminus, the 278-residue chain is Type II restriction enzyme AgeI (278 aa).

Belongs to the BsaWI type II restriction endonuclease family.

The catalysed reaction is Endonucleolytic cleavage of DNA to give specific double-stranded fragments with terminal 5'-phosphates.. A P subtype restriction enzyme that recognizes the double-stranded sequence 5'-ACCGGT-3' and cleaves after A-1. This chain is Type II restriction enzyme AgeI (ageIR), found in Thalassovita gelatinovora (Thalassobius gelatinovorus).